Consider the following 297-residue polypeptide: Ribosomal protein L11 methyltransferase (297 aa).

S-adenosyl-L-methionine-binding residues include threonine 152, glycine 173, aspartate 195, and asparagine 234.

This sequence belongs to the methyltransferase superfamily. PrmA family.

It localises to the cytoplasm. The enzyme catalyses L-lysyl-[protein] + 3 S-adenosyl-L-methionine = N(6),N(6),N(6)-trimethyl-L-lysyl-[protein] + 3 S-adenosyl-L-homocysteine + 3 H(+). Its function is as follows. Methylates ribosomal protein L11. The protein is Ribosomal protein L11 methyltransferase of Cupriavidus taiwanensis (strain DSM 17343 / BCRC 17206 / CCUG 44338 / CIP 107171 / LMG 19424 / R1) (Ralstonia taiwanensis (strain LMG 19424)).